The following is a 450-amino-acid chain: Bifunctional protein GlmU (450 aa).

The interval 1–228 is pyrophosphorylase; it reads MKTALVILAA…ESETLGINSR (228 aa). Residues 8-11, K22, Q75, and 80-81 each bind UDP-N-acetyl-alpha-D-glucosamine; these read LAAG and GT. Mg(2+) is bound at residue D105. Positions 140, 154, 169, and 226 each coordinate UDP-N-acetyl-alpha-D-glucosamine. N226 provides a ligand contact to Mg(2+). The interval 229–249 is linker; that stretch reads TELSAAEAAFQERARTNAFEN. Residues 250 to 450 are N-acetyltransferase; that stretch reads GVTLPAPGTV…AKKAKQQRGS (201 aa). The UDP-N-acetyl-alpha-D-glucosamine site is built by R315 and K333. The active-site Proton acceptor is the H345. The UDP-N-acetyl-alpha-D-glucosamine site is built by Y348 and N359. Acetyl-CoA is bound by residues A362, 368–369, S387, S405, and R422; that span reads NY.

It in the N-terminal section; belongs to the N-acetylglucosamine-1-phosphate uridyltransferase family. This sequence in the C-terminal section; belongs to the transferase hexapeptide repeat family. In terms of assembly, homotrimer. It depends on Mg(2+) as a cofactor.

The protein resides in the cytoplasm. The catalysed reaction is alpha-D-glucosamine 1-phosphate + acetyl-CoA = N-acetyl-alpha-D-glucosamine 1-phosphate + CoA + H(+). The enzyme catalyses N-acetyl-alpha-D-glucosamine 1-phosphate + UTP + H(+) = UDP-N-acetyl-alpha-D-glucosamine + diphosphate. It participates in nucleotide-sugar biosynthesis; UDP-N-acetyl-alpha-D-glucosamine biosynthesis; N-acetyl-alpha-D-glucosamine 1-phosphate from alpha-D-glucosamine 6-phosphate (route II): step 2/2. Its pathway is nucleotide-sugar biosynthesis; UDP-N-acetyl-alpha-D-glucosamine biosynthesis; UDP-N-acetyl-alpha-D-glucosamine from N-acetyl-alpha-D-glucosamine 1-phosphate: step 1/1. It functions in the pathway bacterial outer membrane biogenesis; LPS lipid A biosynthesis. Its function is as follows. Catalyzes the last two sequential reactions in the de novo biosynthetic pathway for UDP-N-acetylglucosamine (UDP-GlcNAc). The C-terminal domain catalyzes the transfer of acetyl group from acetyl coenzyme A to glucosamine-1-phosphate (GlcN-1-P) to produce N-acetylglucosamine-1-phosphate (GlcNAc-1-P), which is converted into UDP-GlcNAc by the transfer of uridine 5-monophosphate (from uridine 5-triphosphate), a reaction catalyzed by the N-terminal domain. This Roseobacter denitrificans (strain ATCC 33942 / OCh 114) (Erythrobacter sp. (strain OCh 114)) protein is Bifunctional protein GlmU.